The sequence spans 376 residues: tRNA-specific 2-thiouridylase MnmA (376 aa).

Residues 14–21 (GMSGGVDS) and M40 contribute to the ATP site. The tract at residues 100–102 (NPD) is interaction with target base in tRNA. C105 functions as the Nucleophile in the catalytic mechanism. C105 and C202 are oxidised to a cystine. G129 contributes to the ATP binding site. Residues 152–154 (KDQ) are interaction with tRNA. Residue C202 is the Cysteine persulfide intermediate of the active site. The interaction with tRNA stretch occupies residues 315 to 316 (RY).

This sequence belongs to the MnmA/TRMU family.

It is found in the cytoplasm. It carries out the reaction S-sulfanyl-L-cysteinyl-[protein] + uridine(34) in tRNA + AH2 + ATP = 2-thiouridine(34) in tRNA + L-cysteinyl-[protein] + A + AMP + diphosphate + H(+). Catalyzes the 2-thiolation of uridine at the wobble position (U34) of tRNA, leading to the formation of s(2)U34. This is tRNA-specific 2-thiouridylase MnmA from Lactococcus lactis subsp. lactis (strain IL1403) (Streptococcus lactis).